A 549-amino-acid polypeptide reads, in one-letter code: MDVVEVAGSWWAQEREDIIMKYEKGHRAGLPEDKGPKPFRSYNNNVDHLGIVHETELPPLTAREAKQIRREISRKSKWVDMLGDWEKYKSSRKLIDRAYKGMPMNIRGPMWSVLLNTEEMKMKNPGRYQIMKEKGKRSSEHIQRIDRDVSGTLRKHIFFRDRYGTKQRELLHILLAYEEYNPEVGYCRDLSHIAALFLLYLPEEDAFWALVQLLASERHSLQGFHSPNGGTVQGLQDQQEHVVATSQPKTMGHQDKKDLCGQCSPLGCLIRILIDGISLGLTLRLWDVYLVEGEQALMPITRIAFKVQQKRLTKTSRCGPWARFCNRFVDTWARDEDTVLKHLRASMKKLTRKQGDLPPPAKPEQGSSASRPVPASRGGKTLCKGDRQAPPGPPARFPRPIWSASPPRAPRSSTPCPGGAVREDTYPVGTQGVPSPALAQGGPQGSWRFLQWNSMPRLPTDLDVEGPWFRHYDFRQSCWVRAISQEDQLAPCWQAEHPAERVRSAFAAPSTDSDQGTPFRARDEQQCAPTSGPCLCGLHLESSQFPPGF.

The 193-residue stretch at 101-293 folds into the Rab-GAP TBC domain; sequence GMPMNIRGPM…RLWDVYLVEG (193 aa). 2 S-palmitoyl cysteine lipidation sites follow: Cys-318 and Cys-325. Disordered stretches follow at residues 350–443 and 507–526; these read LTRK…QGGP and AAPS…DEQQ. Residues 398–417 show a composition bias toward low complexity; sequence PRPIWSASPPRAPRSSTPCP.

Ubiquitinated by a CUL7-based E3 ligase, which leads to proteasomal degradation. Post-translationally, palmitoylation is required for membrane localization and protects TBC1D3 from ubiquitination.

Its subcellular location is the cell membrane. Its function is as follows. Acts as a GTPase activating protein for RAB5. Does not act on RAB4 or RAB11. In Homo sapiens (Human), this protein is TBC1 domain family member 3I.